We begin with the raw amino-acid sequence, 251 residues long: ATP synthase subunit a (251 aa).

6 helical membrane-spanning segments follow: residues Asn-30–Leu-50, Phe-86–Phe-106, Ile-116–Trp-136, Phe-145–Val-165, Phe-195–Leu-215, and Ile-219–Leu-239.

It belongs to the ATPase A chain family. In terms of assembly, F-type ATPases have 2 components, CF(1) - the catalytic core - and CF(0) - the membrane proton channel. CF(1) has five subunits: alpha(3), beta(3), gamma(1), delta(1), epsilon(1). CF(0) has three main subunits: a(1), b(2) and c(9-12). The alpha and beta chains form an alternating ring which encloses part of the gamma chain. CF(1) is attached to CF(0) by a central stalk formed by the gamma and epsilon chains, while a peripheral stalk is formed by the delta and b chains.

The protein localises to the cell inner membrane. Functionally, key component of the proton channel; it plays a direct role in the translocation of protons across the membrane. This chain is ATP synthase subunit a, found in Acidiphilium cryptum (strain JF-5).